Here is a 611-residue protein sequence, read N- to C-terminus: Dihydroxy-acid dehydratase (611 aa).

A Mg(2+)-binding site is contributed by Asp81. Cys122 provides a ligand contact to [2Fe-2S] cluster. Asp123 and Lys124 together coordinate Mg(2+). Lys124 carries the N6-carboxylysine modification. Cys195 contributes to the [2Fe-2S] cluster binding site. A Mg(2+)-binding site is contributed by Glu491. The Proton acceptor role is filled by Ser517.

Belongs to the IlvD/Edd family. Homodimer. It depends on [2Fe-2S] cluster as a cofactor. Mg(2+) serves as cofactor.

It carries out the reaction (2R)-2,3-dihydroxy-3-methylbutanoate = 3-methyl-2-oxobutanoate + H2O. The catalysed reaction is (2R,3R)-2,3-dihydroxy-3-methylpentanoate = (S)-3-methyl-2-oxopentanoate + H2O. It functions in the pathway amino-acid biosynthesis; L-isoleucine biosynthesis; L-isoleucine from 2-oxobutanoate: step 3/4. It participates in amino-acid biosynthesis; L-valine biosynthesis; L-valine from pyruvate: step 3/4. Its function is as follows. Functions in the biosynthesis of branched-chain amino acids. Catalyzes the dehydration of (2R,3R)-2,3-dihydroxy-3-methylpentanoate (2,3-dihydroxy-3-methylvalerate) into 2-oxo-3-methylpentanoate (2-oxo-3-methylvalerate) and of (2R)-2,3-dihydroxy-3-methylbutanoate (2,3-dihydroxyisovalerate) into 2-oxo-3-methylbutanoate (2-oxoisovalerate), the penultimate precursor to L-isoleucine and L-valine, respectively. The chain is Dihydroxy-acid dehydratase from Brucella melitensis biotype 1 (strain ATCC 23456 / CCUG 17765 / NCTC 10094 / 16M).